We begin with the raw amino-acid sequence, 386 residues long: Patatin-15 (386 aa).

Positions 1–23 are cleaved as a signal peptide; that stretch reads MATTKSFLILFFMILATTSSTCA. Positions 32-229 constitute a PNPLA domain; the sequence is LSIDGGGIKG…TVGDPALLSL (198 aa). The GXGXXG signature appears at 36-41; the sequence is GGGIKG. Residues 75 to 79 carry the GXSXG motif; it reads GTSTG. S77 (nucleophile) is an active-site residue. The N-linked (GlcNAc...) asparagine glycan is linked to N115. Catalysis depends on D215, which acts as the Proton acceptor. The DGA/G motif lies at 215-217; sequence DGG. Residues 321–384 are a coiled coil; sequence ENALTGTTTE…DRKKLRANKA (64 aa).

This sequence belongs to the patatin family. Tuber.

Its subcellular location is the vacuole. In terms of biological role, probable lipolytic acyl hydrolase (LAH), an activity which is thought to be involved in the response of tubers to pathogens. The chain is Patatin-15 from Solanum tuberosum (Potato).